We begin with the raw amino-acid sequence, 271 residues long: PH domain-containing protein ECU06_0670 (271 aa).

Residues 26–145 (AKKTLDSSES…EKKNDAFIPP (120 aa)) are disordered. Composition is skewed to basic and acidic residues over residues 42–64 (EVGE…EPAM), 92–120 (QPEK…LLDK), and 128–140 (EENA…KKND). Residues 166 to 267 (NTVVEGWMWK…WVEKLNETIR (102 aa)) form the PH domain.

This is PH domain-containing protein ECU06_0670 from Encephalitozoon cuniculi (strain GB-M1) (Microsporidian parasite).